Here is a 284-residue protein sequence, read N- to C-terminus: Pantothenate synthetase (284 aa).

Position 30–37 (30–37 (MGNLHDGH)) interacts with ATP. Catalysis depends on His-37, which acts as the Proton donor. Gln-61 contributes to the (R)-pantoate binding site. Gln-61 serves as a coordination point for beta-alanine. 149–152 (GEKD) lines the ATP pocket. (R)-pantoate is bound at residue Gln-155. ATP-binding positions include Ile-178 and 186–189 (LSSR).

The protein belongs to the pantothenate synthetase family. In terms of assembly, homodimer.

The protein resides in the cytoplasm. It carries out the reaction (R)-pantoate + beta-alanine + ATP = (R)-pantothenate + AMP + diphosphate + H(+). It participates in cofactor biosynthesis; (R)-pantothenate biosynthesis; (R)-pantothenate from (R)-pantoate and beta-alanine: step 1/1. Catalyzes the condensation of pantoate with beta-alanine in an ATP-dependent reaction via a pantoyl-adenylate intermediate. The chain is Pantothenate synthetase from Salmonella choleraesuis (strain SC-B67).